A 951-amino-acid polypeptide reads, in one-letter code: Serine/threonine-protein phosphatase 4 regulatory subunit 1 (951 aa).

HEAT repeat units follow at residues 26 to 63, 65 to 81, 82 to 119, 127 to 164, 168 to 206, 208 to 246, 248 to 285, and 287 to 324; these read ESDV…VFNR, MVAR…CDDE, RDCI…FCQE, AFSK…QELI, DVET…MVGK, ITER…VVGQ, ATEE…ATCQ, and IRRT…TFAN. Disordered regions lie at residues 325–377, 411–451, and 474–499; these read PSSS…HSSA, SESP…PLDQ, and QQDP…GPPN. Residues 332–365 show a composition bias toward basic and acidic residues; it reads FKDESKSSEDSSAEDKDRMRDNDVVEEEHRRPED. 2 stretches are compositionally biased toward polar residues: residues 411-421 and 430-445; these read SESPQEAASND and NSKS…SSPE. Residues 474–487 show a composition bias toward basic and acidic residues; it reads QQDPEERLSPERTG. One copy of the HEAT 9 repeat lies at 506-543; the sequence is KELEEMIENLEPHMDDPDVKAQVDVLSAALRASSLDAH. The interval 590–612 is disordered; that stretch reads DYVHGGADVSPGDGFSPDEDRRP. HEAT repeat units follow at residues 699-735, 800-838, and 862-899; these read LTAA…LLHI, WISY…RCPK, and QFAV…EKEY. Phosphoserine is present on Ser936.

In terms of assembly, serine/threonine-protein phosphatase 4 (PP4) occurs in different assemblies of the catalytic and one or more regulatory subunits. Component of the PP4 complex PPP4C-PPP4R1. Interacts with HDAC3.

In terms of biological role, regulatory subunit of serine/threonine-protein phosphatase 4. May play a role in regulation of cell division in renal glomeruli. The PPP4C-PPP4R1 PP4 complex may play a role in dephosphorylation and regulation of HDAC3. Plays a role in the inhibition of TNF-induced NF-kappa-B activation by regulating the dephosphorylation of TRAF2. The sequence is that of Serine/threonine-protein phosphatase 4 regulatory subunit 1 (Ppp4r1) from Mus musculus (Mouse).